Here is a 155-residue protein sequence, read N- to C-terminus: Large ribosomal subunit protein uL22c (155 aa).

This sequence belongs to the universal ribosomal protein uL22 family. In terms of assembly, part of the 50S ribosomal subunit.

The protein resides in the plastid. Its subcellular location is the chloroplast. Its function is as follows. This protein binds specifically to 23S rRNA. The globular domain of the protein is located near the polypeptide exit tunnel on the outside of the subunit, while an extended beta-hairpin is found that lines the wall of the exit tunnel in the center of the 70S ribosome. The protein is Large ribosomal subunit protein uL22c (rpl22) of Nicotiana tomentosiformis (Tobacco).